The sequence spans 465 residues: Mothers against decapentaplegic homolog 5 (465 aa).

Threonine 2 is modified (N-acetylthreonine). The 125-residue stretch at proline 13–proline 137 folds into the MH1 domain. Zn(2+) is bound by residues cysteine 65, cysteine 110, cysteine 122, and histidine 127. Residues asparagine 163–threonine 243 form a disordered region. A compositionally biased stretch (polar residues) spans glutamine 169–serine 182. The span at proline 186–proline 197 shows a compositional bias: pro residues. Residues alanine 198–proline 214 are compositionally biased toward low complexity. A compositionally biased stretch (polar residues) spans glycine 234–threonine 243. Residues tryptophan 271 to serine 465 form the MH2 domain. Phosphoserine occurs at positions 463 and 465.

Belongs to the dwarfin/SMAD family. In terms of assembly, homodimer. Forms trimers with the co-SMAD SMAD4. Interacts with PEBP2-alpha subunit and SMURF1. Interacts with SUV39H1 and SUV39H2. Interacts (via MH2 domain) with LEMD3. Interacts with WWP1. Interacts with TMEM119. Interacts with ZNF8. Interacts with RANBP3L. Interacts with HK1. Interacts with HGS; this interaction attenuates BMP signaling. Post-translationally, phosphorylated on serine by BMP (bone morphogenetic proteins) type 1 receptor kinase. Ubiquitin-mediated proteolysis by SMAD-specific E3 ubiquitin ligase SMURF1.

The protein localises to the cytoplasm. Its subcellular location is the nucleus. The protein resides in the mitochondrion. Functionally, transcriptional regulator that plays a role in various cellular processes including embryonic development, cell differentiation, angiogenesis and tissue homeostasis. Upon BMP ligand binding to their receptors at the cell surface, is phosphorylated by activated type I BMP receptors (BMPRIs) and associates with SMAD4 to form a heteromeric complex which translocates into the nucleus acting as transcription factor. In turn, the hetero-trimeric complex recognizes cis-regulatory elements containing Smad Binding Elements (SBEs) to modulate the outcome of the signaling network. Non-phosphorylated SMAD5 has a cytoplasmic role in energy metabolism regulation by promoting mitochondrial respiration and glycolysis in response to cytoplasmic pH changes. Mechanistically, interacts with hexokinase 1/HK1 and thereby accelerates glycolysis. The polypeptide is Mothers against decapentaplegic homolog 5 (Smad5) (Rattus norvegicus (Rat)).